The following is a 149-amino-acid chain: Large ribosomal subunit protein bL9 (149 aa).

It belongs to the bacterial ribosomal protein bL9 family.

Binds to the 23S rRNA. The sequence is that of Large ribosomal subunit protein bL9 from Salinibacter ruber (strain DSM 13855 / M31).